The primary structure comprises 74 residues: Salivary glue protein Sgs-7 (74 aa).

Residues 1–23 (MKLIAVTIIACILLIGFSDLALG) form the signal peptide.

This Drosophila melanogaster (Fruit fly) protein is Salivary glue protein Sgs-7 (Sgs7).